Here is a 161-residue protein sequence, read N- to C-terminus: MKIAGLKQLNTALKEAASGGFSRQASRWLEECGQDFLEIVQSELISTQTIDTEKLLSSFEKGAEDNLWIVQSGGLSLEVGTQLDYASFLNDGHWTSKQDVRWVPGRFQGSRFIYDPAASTGMALKRKWIPGTGYWDHALLLYEQLFEKSLESKLRQWLKKL.

The protein to B.subtilis YqbI.

The polypeptide is Phage-like element PBSX protein XkdI (xkdI) (Bacillus subtilis (strain 168)).